The primary structure comprises 1026 residues: Vacuolar protein sorting-associated protein 18 homolog (1026 aa).

A coiled-coil region spans residues 858–896 (IVDFLKRNKQRLEKLERSMKEATEIASEIRDKQEKLKNR). Residues 906–932 (CSHCARPISGRAFNVHSCRHFFHRECL) form an RING-type; degenerate zinc finger.

In terms of assembly, probable core component of at least two putative endosomal tethering complexes, the homotypic fusion and vacuole protein sorting (HOPS) complex and the class C core vacuole/endosome tethering (CORVET) complex. Their common core is composed of the class C Vps proteins vps-11, vps-16 and vps-18, which in HOPS further associates with vps-33.1, vps-39 and vps-41 and in CORVET with vps-8 and vps-33.2. In hermaphrodites, expressed in coelomocytes and gonadal sheath cells.

The protein resides in the cytoplasm. The protein localises to the late endosome membrane. Its subcellular location is the lysosome membrane. It localises to the early endosome. It is found in the cytoplasmic vesicle. The protein resides in the autophagosome. The protein localises to the clathrin-coated vesicle. In terms of biological role, plays a role in vesicle-mediated protein trafficking to lysosomal compartments including the endocytic membrane transport and autophagic pathways. Believed to act as a core component of the putative HOPS and CORVET endosomal tethering complexes which are proposed to be involved in the rab-5-to-rab-7 endosome conversion probably implicating sand-1, and via binding SNAREs and SNARE complexes to mediate tethering and docking events during SNARE-mediated membrane fusion. The HOPS complex is proposed to be recruited to rab-7 on the late endosomal membrane and to regulate late endocytic, phagocytic and autophagic traffic towards lysosomes. Within the HOPS complex, contributes to the normal development of gut granules in intestinal cells of the embryo, and also promotes the trafficking of embryonic intestinal gut granules away from lysosomes. The CORVET complex is proposed to function as a rab-5 effector to mediate early endosome fusion probably in specific endosome subpopulations. Required for fusion of endosomes and autophagosomes with lysosomes. Plays a role in the degradation of apoptotic cells during programmed cell death. The sequence is that of Vacuolar protein sorting-associated protein 18 homolog from Caenorhabditis elegans.